The following is a 101-amino-acid chain: Long chronological lifespan protein 1 (101 aa).

The N-terminal stretch at 1-17 (MKNAALCEALPLLATCS) is a signal peptide. Residue serine 81 is the site of GPI-anchor amidated serine attachment. The propeptide at 82-101 (FAKPSFSFFFFLLTSLLSPF) is removed in mature form.

It localises to the cell membrane. This chain is Long chronological lifespan protein 1 (LCL1), found in Saccharomyces cerevisiae (strain ATCC 204508 / S288c) (Baker's yeast).